Consider the following 205-residue polypeptide: Holliday junction branch migration complex subunit RuvA (205 aa).

Positions 1-64 (MIGRLRGLLV…EDAQLLYGFI (64 aa)) are domain I. The interval 65–143 (TKQERALFRL…SLMEASHGNE (79 aa)) is domain II. The flexible linker stretch occupies residues 144–156 (REFVLQSNYTPAP). The domain III stretch occupies residues 157 to 205 (VVNTAEEDAISALLALGYKPAQASKAVSSVFEEGMDSETLIKASLKSML).

The protein belongs to the RuvA family. Homotetramer. Forms an RuvA(8)-RuvB(12)-Holliday junction (HJ) complex. HJ DNA is sandwiched between 2 RuvA tetramers; dsDNA enters through RuvA and exits via RuvB. An RuvB hexamer assembles on each DNA strand where it exits the tetramer. Each RuvB hexamer is contacted by two RuvA subunits (via domain III) on 2 adjacent RuvB subunits; this complex drives branch migration. In the full resolvosome a probable DNA-RuvA(4)-RuvB(12)-RuvC(2) complex forms which resolves the HJ.

It is found in the cytoplasm. Its function is as follows. The RuvA-RuvB-RuvC complex processes Holliday junction (HJ) DNA during genetic recombination and DNA repair, while the RuvA-RuvB complex plays an important role in the rescue of blocked DNA replication forks via replication fork reversal (RFR). RuvA specifically binds to HJ cruciform DNA, conferring on it an open structure. The RuvB hexamer acts as an ATP-dependent pump, pulling dsDNA into and through the RuvAB complex. HJ branch migration allows RuvC to scan DNA until it finds its consensus sequence, where it cleaves and resolves the cruciform DNA. The sequence is that of Holliday junction branch migration complex subunit RuvA from Shewanella loihica (strain ATCC BAA-1088 / PV-4).